A 146-amino-acid chain; its full sequence is Probable U6 snRNA-associated Sm-like protein LSm4 (146 aa).

Residues 2–75 (LPLSLLKTAQ…IKYLRVPDEV (74 aa)) enclose the Sm domain. The segment covering 80-91 (QEEAKSRTDRKP) has biased composition (basic and acidic residues). A disordered region spans residues 80–146 (QEEAKSRTDR…GGRGGGRGRG (67 aa)). Over residues 137-146 (GGRGGGRGRG) the composition is skewed to gly residues.

This sequence belongs to the snRNP Sm proteins family. LSm subunits form a heteromer with a doughnut shape.

It is found in the nucleus. Functionally, binds specifically to the 3'-terminal U-tract of U6 snRNA. The chain is Probable U6 snRNA-associated Sm-like protein LSm4 from Nicotiana tabacum (Common tobacco).